A 290-amino-acid chain; its full sequence is MSNWLVDKLIPSIMRSESQKSSVPEGLWHKCPSCEAVLYRPELEKTLDVCPKCDHHMRINARTRLDIFLDEEGREELGADLEPVDRLKFRDSKKYKDRLSAAQKDTGEKDALIAMSGKLEGMPVVACAFEFSFMGGSMGAIVGERFVRAANVALEQRCPLICFSASGGARMQEALISLMQMAKTSAVLARLREEGIPFVSVLTDPVYGGVSASLAMLGDVIVGEPKALIGFAGPRVIEQTVREKLPEGFQRSEFLLEHGAIDMIVHRGELRPRLARLLSAFTHSPSPVSA.

One can recognise a CoA carboxyltransferase N-terminal domain in the interval Leu-27–Ala-290. Zn(2+) contacts are provided by Cys-31, Cys-34, Cys-50, and Cys-53. The C4-type zinc finger occupies Cys-31 to Cys-53.

The protein belongs to the AccD/PCCB family. As to quaternary structure, acetyl-CoA carboxylase is a heterohexamer composed of biotin carboxyl carrier protein (AccB), biotin carboxylase (AccC) and two subunits each of ACCase subunit alpha (AccA) and ACCase subunit beta (AccD). Requires Zn(2+) as cofactor.

It is found in the cytoplasm. It carries out the reaction N(6)-carboxybiotinyl-L-lysyl-[protein] + acetyl-CoA = N(6)-biotinyl-L-lysyl-[protein] + malonyl-CoA. It participates in lipid metabolism; malonyl-CoA biosynthesis; malonyl-CoA from acetyl-CoA: step 1/1. In terms of biological role, component of the acetyl coenzyme A carboxylase (ACC) complex. Biotin carboxylase (BC) catalyzes the carboxylation of biotin on its carrier protein (BCCP) and then the CO(2) group is transferred by the transcarboxylase to acetyl-CoA to form malonyl-CoA. The polypeptide is Acetyl-coenzyme A carboxylase carboxyl transferase subunit beta (Pseudomonas paraeruginosa (strain DSM 24068 / PA7) (Pseudomonas aeruginosa (strain PA7))).